The following is a 228-amino-acid chain: NAD(P)H-hydrate epimerase (228 aa).

The 207-residue stretch at 9-215 folds into the YjeF N-terminal domain; sequence AISIDEELFN…RLEEKYSLEL (207 aa). Position 58–62 (58–62) interacts with (6S)-NADPHX; that stretch reads NNGGD. K(+)-binding residues include asparagine 59 and aspartate 123. (6S)-NADPHX is bound by residues 127–133 and aspartate 156; that span reads GFSFKPP. Serine 159 is a binding site for K(+).

This sequence belongs to the NnrE/AIBP family. It depends on K(+) as a cofactor.

The catalysed reaction is (6R)-NADHX = (6S)-NADHX. The enzyme catalyses (6R)-NADPHX = (6S)-NADPHX. Catalyzes the epimerization of the S- and R-forms of NAD(P)HX, a damaged form of NAD(P)H that is a result of enzymatic or heat-dependent hydration. This is a prerequisite for the S-specific NAD(P)H-hydrate dehydratase to allow the repair of both epimers of NAD(P)HX. The chain is NAD(P)H-hydrate epimerase from Anopheles darlingi (Mosquito).